The following is a 471-amino-acid chain: dTDP-4-dehydro-6-deoxy-alpha-D-glucopyranose 2,3-dehydratase (471 aa).

DTDP-4-dehydro-6-deoxy-alpha-D-glucose contacts are provided by residues tryptophan 67, 155–159 (TRSNY), serine 193, asparagine 238, tryptophan 288, arginine 351, 367–369 (QCT), 372–373 (NY), and 405–408 (EGGR).

It belongs to the hexose 2,3-dehydratase family. Homodimer.

It carries out the reaction dTDP-4-dehydro-6-deoxy-alpha-D-glucose = dTDP-3,4-didehydro-2,6-dideoxy-alpha-D-glucose + H2O. It functions in the pathway antibiotic biosynthesis. Involved in the biosynthesis of the 2,3,6-trideoxysugar L-epivancosamine, the terminal sugar added to the aglycone scaffold of chloroeremomycin, a member of the glycopeptide antibiotics vancomycin family. Catalyzes the removal of the hydroxyl group at position C-2 of the hexose ring of dTDP-4-dehydro-6-deoxy-alpha-D-glucopyranose, and the oxidation of the hydroxyl group at position C-3 to form a carbonyl functionality. The product of the reaction, dTDP-2,6-dideoxy-D-glycero-hex-2-enos-4-ulose, is a highly unstable diketosugar, which spontaneously forms dTDP-3,4-didehydro-2,6-dideoxy-alpha-D-glucose. This Amycolatopsis orientalis (Nocardia orientalis) protein is dTDP-4-dehydro-6-deoxy-alpha-D-glucopyranose 2,3-dehydratase.